The following is a 665-amino-acid chain: Succinate dehydrogenase [ubiquinone] flavoprotein subunit A, mitochondrial (665 aa).

The transit peptide at 1-45 directs the protein to the mitochondrion; the sequence is MALLKVAPSRLLSRALQLASRVQNCTPTVTTARRNFHFTVYGRKD. A72, A75, T94, K95, and S101 together coordinate FAD. Residue H102 is modified to Tele-8alpha-FAD histidine. FAD-binding residues include T103, G108, A224, and D278. 3 residues coordinate oxaloacetate: H299, R343, and H410. Residue R343 is the Proton acceptor of the active site. E443 provides a ligand contact to FAD. Positions 454 and 457 each coordinate oxaloacetate. Positions 459 and 460 each coordinate FAD.

This sequence belongs to the FAD-dependent oxidoreductase 2 family. FRD/SDH subfamily. As to quaternary structure, component of complex II composed of four subunits: a flavoprotein (FP), an iron-sulfur protein (IP), and a cytochrome b composed of a large and a small subunit. FAD serves as cofactor.

It is found in the mitochondrion inner membrane. The catalysed reaction is a ubiquinone + succinate = a ubiquinol + fumarate. The enzyme catalyses (R)-malate + a quinone = enol-oxaloacetate + a quinol. It carries out the reaction (S)-malate + a quinone = enol-oxaloacetate + a quinol. It functions in the pathway carbohydrate metabolism; tricarboxylic acid cycle; fumarate from succinate (eukaryal route): step 1/1. Its activity is regulated as follows. Enol-oxaloacetate inhibits the succinate dehydrogenase activity. Functionally, flavoprotein (FP) subunit of succinate dehydrogenase (SDH) that is involved in complex II of the mitochondrial electron transport chain and is responsible for transferring electrons from succinate to ubiquinone (coenzyme Q). SDH also oxidizes malate to the non-canonical enol form of oxaloacetate, enol-oxaloacetate. Enol-oxaloacetate, which is a potent inhibitor of the succinate dehydrogenase activity, is further isomerized into keto-oxaloacetate. The polypeptide is Succinate dehydrogenase [ubiquinone] flavoprotein subunit A, mitochondrial (sdha-a) (Xenopus laevis (African clawed frog)).